Consider the following 221-residue polypeptide: uncharacterized protein (221 aa).

The Peptidase S8 domain maps to 1 to 189 (MDSGKDTNGY…NVVYCSEKAV (189 aa)).

It belongs to the peptidase S8 family.

This is an uncharacterized protein from Aquifex aeolicus (strain VF5).